We begin with the raw amino-acid sequence, 654 residues long: Cysteine-rich receptor-like protein kinase 40 (654 aa).

Positions 1-27 are cleaved as a signal peptide; sequence MGKCSALMIFLSSSLLLVLQTLHVVNA. 2 consecutive Gnk2-homologous domains span residues 28-131 and 143-250; these read VKCF…NQST and WPSP…LYSF. The Extracellular segment spans residues 28 to 287; sequence VKCFGNSFNG…VKKGKSIGYG (260 aa). N-linked (GlcNAc...) asparagine glycosylation is found at Asn38, Asn65, Asn128, Asn154, Asn167, and Asn256. Residues 288 to 308 form a helical membrane-spanning segment; that stretch reads GIIAIVVVFTFINLLVFIGFI. At 309 to 654 the chain is on the cytoplasmic side; it reads KVYARRGKLN…DDVFTELSCR (346 aa). A Protein kinase domain is found at 348 to 619; that stretch reads FSSENTLGQG…VIIWLGSETI (272 aa). ATP-binding positions include 354 to 362 and Lys376; that span reads LGQGGFGTV. Tyr421 bears the Phosphotyrosine mark. The active-site Proton acceptor is Asp473. A Phosphoserine modification is found at Ser477. Thr513 carries the phosphothreonine modification. Phosphotyrosine is present on Tyr521.

This sequence belongs to the protein kinase superfamily. Ser/Thr protein kinase family. CRK subfamily.

The protein localises to the membrane. It catalyses the reaction L-seryl-[protein] + ATP = O-phospho-L-seryl-[protein] + ADP + H(+). It carries out the reaction L-threonyl-[protein] + ATP = O-phospho-L-threonyl-[protein] + ADP + H(+). This is Cysteine-rich receptor-like protein kinase 40 (CRK40) from Arabidopsis thaliana (Mouse-ear cress).